The chain runs to 397 residues: Tryptophan synthase beta chain (397 aa).

Lys87 is subject to N6-(pyridoxal phosphate)lysine.

The protein belongs to the TrpB family. In terms of assembly, tetramer of two alpha and two beta chains. It depends on pyridoxal 5'-phosphate as a cofactor.

The enzyme catalyses (1S,2R)-1-C-(indol-3-yl)glycerol 3-phosphate + L-serine = D-glyceraldehyde 3-phosphate + L-tryptophan + H2O. It participates in amino-acid biosynthesis; L-tryptophan biosynthesis; L-tryptophan from chorismate: step 5/5. Its function is as follows. The beta subunit is responsible for the synthesis of L-tryptophan from indole and L-serine. In Salmonella arizonae (strain ATCC BAA-731 / CDC346-86 / RSK2980), this protein is Tryptophan synthase beta chain.